The sequence spans 654 residues: Bifunctional 3'-phosphoadenosine 5'-phosphosulfate synthase pps-1 (654 aa).

Positions 1–26 (MLTPRDENNEGDAMPMLKKPRYSSLS) are disordered. Positions 1 to 231 (MLTPRDENNE…VLDHLESKGL (231 aa)) are adenylyl-sulfate kinase. Residue 66–71 (GAGKTT) participates in ATP binding. Residues 93–96 (DNIR), F105, 110–113 (RQEN), 136–137 (IS), K175, and 190–191 (GF) each bind adenosine 5'-phosphosulfate. ATP-binding positions include C218, 449-452 (QLRN), 550-554 (GRDPA), and A592. A sulfate adenylyltransferase region spans residues 242 to 653 (VRELFVSDDL…AGYYKSLQNS (412 aa)).

The protein in the N-terminal section; belongs to the APS kinase family. It in the C-terminal section; belongs to the sulfate adenylyltransferase family.

It localises to the nucleus. It catalyses the reaction sulfate + ATP + H(+) = adenosine 5'-phosphosulfate + diphosphate. It carries out the reaction adenosine 5'-phosphosulfate + ATP = 3'-phosphoadenylyl sulfate + ADP + H(+). It participates in sulfur metabolism; sulfate assimilation. Its function is as follows. Bifunctional enzyme with both ATP sulfurylase and APS kinase activity, which mediates two steps in the sulfate activation pathway. The first step is the transfer of a sulfate group to ATP to yield adenosine 5'-phosphosulfate (APS), and the second step is the transfer of a phosphate group from ATP to APS yielding 3'-phosphoadenylylsulfate (PAPS: activated sulfate donor used by sulfotransferase). Required for normal growth and development. Involved in several aspects of both embryonic and postembryonic development, including molting, changes in cell shape, and patterning of epithelial and muscle cells. The protein is Bifunctional 3'-phosphoadenosine 5'-phosphosulfate synthase pps-1 of Caenorhabditis elegans.